The chain runs to 242 residues: DNA repair protein RecO (242 aa).

Belongs to the RecO family.

Its function is as follows. Involved in DNA repair and RecF pathway recombination. This Nitrosospira multiformis (strain ATCC 25196 / NCIMB 11849 / C 71) protein is DNA repair protein RecO.